A 112-amino-acid chain; its full sequence is C-C motif chemokine 27 (112 aa).

A signal peptide spans 1–24; the sequence is MKGPPTFCSLLLLSLLLSPDPTAA. Cystine bridges form between C33–C62 and C34–C77.

The protein belongs to the intercrine beta (chemokine CC) family. As to quaternary structure, monomer, dimer, and tetramer. Heparin avidly promotes oligomerization. Interacts with TNFAIP6 (via Link domain). Testis, thymus, placenta, ovary and skin.

The protein resides in the secreted. Its function is as follows. Chemotactic factor that attracts skin-associated memory T-lymphocytes. May play a role in mediating homing of lymphocytes to cutaneous sites. Binds to CCR10. In Homo sapiens (Human), this protein is C-C motif chemokine 27 (CCL27).